A 165-amino-acid chain; its full sequence is Urease accessory protein UreE (165 aa).

The protein belongs to the UreE family.

It is found in the cytoplasm. In terms of biological role, involved in urease metallocenter assembly. Binds nickel. Probably functions as a nickel donor during metallocenter assembly. The polypeptide is Urease accessory protein UreE (Flavobacterium johnsoniae (strain ATCC 17061 / DSM 2064 / JCM 8514 / BCRC 14874 / CCUG 350202 / NBRC 14942 / NCIMB 11054 / UW101) (Cytophaga johnsonae)).